We begin with the raw amino-acid sequence, 81 residues long: MSSTYCGNSSAKMSVNEVSAFSLTLEQKTGFAFVGILCIFLGLLIIRCFKILLDPYSSMPSSTWEDEVEEFDKGTFEYALA.

A helical transmembrane segment spans residues 29-49; that stretch reads TGFAFVGILCIFLGLLIIRCF.

Belongs to the cortexin family.

It localises to the membrane. This chain is Cortexin-2 (CTXN2), found in Homo sapiens (Human).